The following is a 356-amino-acid chain: MVKHWRLILLLALVPLLLSGCGKPFLSTLKPAGEVADKQYDLTVLSTLIMVVVVAVVSVIFFYVIVRFRRSRVGENTIPKQVEGNKFLEITWTVIPILLLIILVIPVVLYTLELADTSPMDKKGRKAEDALVVNVRANLYWWEFEYPDYGIITSQELIVPTDQRVYFNLKASDVKHSFWIPSVGGKLDTNTDNENKFFLTFDSKRSKEAGDMFFGKCAELCGPSHALMDFKVKTMSAKEFQGWTKEMKNYKSTAESDLAKQGEELFKEKNCLSCHAVEPNDKRAEAARTAPNLATFGERTKVAGVKEANKENVKAWLKDPDSIKPGNKMTGTYPKLSDSETNALYEYLKGLKAESK.

An N-terminal signal peptide occupies residues 1-20; sequence MVKHWRLILLLALVPLLLSG. Cysteine 21 carries N-palmitoyl cysteine lipidation. Cysteine 21 carries S-diacylglycerol cysteine lipidation. The Extracellular segment spans residues 21–47; sequence CGKPFLSTLKPAGEVADKQYDLTVLST. The cytochrome c oxidase subunit II stretch occupies residues 21-257; the sequence is CGKPFLSTLK…KNYKSTAESD (237 aa). The chain crosses the membrane as a helical span at residues 48 to 66; sequence LIMVVVVAVVSVIFFYVIV. Residues 67–87 lie on the Cytoplasmic side of the membrane; it reads RFRRSRVGENTIPKQVEGNKF. Residues 88 to 106 form a helical membrane-spanning segment; the sequence is LEITWTVIPILLLIILVIP. The Extracellular segment spans residues 107–356; sequence VVLYTLELAD…YLKGLKAESK (250 aa). Residues histidine 176, cysteine 217, cysteine 221, and histidine 225 each contribute to the Cu cation site. Residues 258 to 356 enclose the Cytochrome c domain; the sequence is LAKQGEELFK…YLKGLKAESK (99 aa). The heme c site is built by cysteine 271, cysteine 274, histidine 275, and methionine 329.

This sequence belongs to the cytochrome c oxidase subunit 2 family. Requires Cu cation as cofactor. Heme c serves as cofactor.

Its subcellular location is the cell membrane. The catalysed reaction is 4 Fe(II)-[cytochrome c] + O2 + 8 H(+)(in) = 4 Fe(III)-[cytochrome c] + 2 H2O + 4 H(+)(out). Functionally, subunits I and II form the functional core of the enzyme complex. Electrons originating in cytochrome c are transferred via heme a and Cu(A) to the binuclear center formed by heme a3 and Cu(B). The chain is Cytochrome c oxidase subunit 2 (ctaC) from Bacillus subtilis (strain 168).